Reading from the N-terminus, the 620-residue chain is Nuclear cap-binding protein subunit 3 (620 aa).

K12 is covalently cross-linked (Glycyl lysine isopeptide (Lys-Gly) (interchain with G-Cter in SUMO2)). Residues A15 to A28 are compositionally biased toward low complexity. Residues A15 to V42 are disordered. S25 is subject to Phosphoserine. K70 is covalently cross-linked (Glycyl lysine isopeptide (Lys-Gly) (interchain with G-Cter in SUMO2)). S73 carries the phosphoserine modification. Residues E126–I187 form an RNA recognition motif (RRM) domain region. Positions W155–D158 match the WLDD motif; essential for 7-methylguanosine-containing mRNA cap binding motif. Residues D185–A198 are compositionally biased toward basic and acidic residues. Disordered stretches follow at residues D185 to L233, H332 to S419, and I436 to S620. K186 participates in a covalent cross-link: Glycyl lysine isopeptide (Lys-Gly) (interchain with G-Cter in SUMO2). Residues S209 and S210 each carry the phosphoserine modification. Acidic residues-rich tracts occupy residues S209–L230 and E341–A365. Residues D366–A388 show a composition bias toward basic and acidic residues. T413 is modified (phosphothreonine). S415 is modified (phosphoserine). Composition is skewed to basic and acidic residues over residues P459 to R474 and V511 to S521. K541 participates in a covalent cross-link: Glycyl lysine isopeptide (Lys-Gly) (interchain with G-Cter in SUMO2). Basic and acidic residues-rich tracts occupy residues K554–G569 and I585–L598. Low complexity predominate over residues E611–S620. S620 bears the Phosphoserine mark.

Belongs to the NCBP3 family. Component of an alternative cap-binding complex (CBC) composed of NCBP1/CBP80 and NCBP3. Interacts with SRRT, KPNA3, THOC5 and EIF4A3.

Its subcellular location is the nucleus. The protein localises to the cytoplasm. Associates with NCBP1/CBP80 to form an alternative cap-binding complex (CBC) which plays a key role in mRNA export. NCBP3 serves as adapter protein linking the capped RNAs (m7GpppG-capped RNA) to NCBP1/CBP80. Unlike the conventional CBC with NCBP2 which binds both small nuclear RNA (snRNA) and messenger (mRNA) and is involved in their export from the nucleus, the alternative CBC with NCBP3 does not bind snRNA and associates only with mRNA thereby playing a role in only mRNA export. The alternative CBC is particularly important in cellular stress situations such as virus infections and the NCBP3 activity is critical to inhibit virus growth. In Homo sapiens (Human), this protein is Nuclear cap-binding protein subunit 3.